A 352-amino-acid chain; its full sequence is MELLNATLAKIYGLDKEAMVKAQAHQDILIKPQGSLGKLEAIVVQLAGIQGDAKPKTAKKAIITMAGDHGIIDEKFHNWPKEVTVQMLQNFAHGGAAINVLSRQVGARNVVVALGVATPMAADPNIINRNIAPGTNNMVHGPAMTREQAVKAIEVGIEIVNAEVKKGLDLVGTGDMGIGNTSPSAAICSIITGRSLEDVTGRGTGASDEQMKLKRNAIAKAISLNNPDAKDAIDVLSKVGGYEIGGLAGVILGAAANRVAVVVDGFISGAAALIAYTICPQVKDFMFAAHQSVEPGHRILLEHMGLDAILKMDMRLGEGTGAALAMNIIEAANRIQHEMASFADAGVSEKQS.

The active-site Proton acceptor is E318.

The protein belongs to the CobT family.

The enzyme catalyses 5,6-dimethylbenzimidazole + nicotinate beta-D-ribonucleotide = alpha-ribazole 5'-phosphate + nicotinate + H(+). The protein operates within nucleoside biosynthesis; alpha-ribazole biosynthesis; alpha-ribazole from 5,6-dimethylbenzimidazole: step 1/2. In terms of biological role, catalyzes the synthesis of alpha-ribazole-5'-phosphate from nicotinate mononucleotide (NAMN) and 5,6-dimethylbenzimidazole (DMB). This chain is Nicotinate-nucleotide--dimethylbenzimidazole phosphoribosyltransferase, found in Dehalococcoides mccartyi (strain CBDB1).